The chain runs to 454 residues: G-protein coupled receptor 39 (454 aa).

Over 1-34 (MASPSHPSRDCSQVIDHSHVPEFEVATWIKITLI) the chain is Extracellular. Disulfide bonds link cysteine 11–cysteine 191 and cysteine 108–cysteine 210. Zn(2+) contacts are provided by histidine 17 and histidine 19. A helical transmembrane segment spans residues 35 to 55 (LVYLVIFVVGILGNSVTIRVT). Over 56-69 (QVLQKKGYLQKEVT) the chain is Cytoplasmic. Residues 70 to 89 (DHMVSLACSDILVFLIGMPM) traverse the membrane as a helical segment. Residues 90 to 109 (EFYSIIWNPLTTPSYTVSCK) lie on the Extracellular side of the membrane. Residues 110–131 (VHTFLFEACSYATLLHVLTLSF) form a helical membrane-spanning segment. Over 132 to 151 (ERYIAICHPFRYKAMSGPCQ) the chain is Cytoplasmic. The helical transmembrane segment at 152-172 (VKLLIGFVWVTSALVALPLLF) threads the bilayer. Residues 173-217 (AMGVEYPLVNVPSHRGLICNRSRTRHQEQPESSNMSICTNLSSRW) are Extracellular-facing. Residues asparagine 192, asparagine 206, and asparagine 212 are each glycosylated (N-linked (GlcNAc...) asparagine). Residues 218-242 (TVFQSSIFSAFVVYLVVLVSVAFMC) form a helical membrane-spanning segment. Residues 243–283 (WSMMQVLRRSKQGTLAAQGQQLQLRKLESQESRSARRQTII) lie on the Cytoplasmic side of the membrane. A helical transmembrane segment spans residues 284 to 305 (FLELIVVTLAVCWMPNQVRRIM). Residues 306-323 (AAAKPKHDWTKSYFRAYM) lie on the Extracellular side of the membrane. The helical transmembrane segment at 324–344 (ILLPFSDTFFYLSSVVNPLLY) threads the bilayer. The Cytoplasmic portion of the chain corresponds to 345-454 (NVSSQQFRSV…TRNGFQEHEV (110 aa)). Serine 397 carries the phosphoserine modification. The interval 415 to 454 (HSEAKPESKPQELSCESPEPNSERKPANPATRNGFQEHEV) is disordered.

It belongs to the G-protein coupled receptor 1 family. Interacts with HTR1A. Interacts with GALR1. As to expression, detected in liver, kidney, abomasum, uterus, small intestine and colon.

It is found in the cell membrane. In terms of biological role, zinc-sensing receptor that can sense changes in extracellular Zn(2+), mediate Zn(2+) signal transmission, and participates in the regulation of numerous physiological processes including glucose homeostasis regulation, gastrointestinal mobility, hormone secretion and cell death. Activation by Zn(2+) in keratinocytes increases the intracellular concentration of Ca(2+) and activates the ERK/MAPK and PI3K/AKT signaling pathways leading to epithelial repair. Plays an essential role in normal wound healing by inducing the production of cytokines including the major inflammatory cytokine IL6 via the PKC/MAPK/CEBPB pathway. Regulates adipose tissue metabolism, especially lipolysis, and regulates the function of lipases, such as hormone-sensitive lipase and adipose triglyceride lipase. Plays a role in the inhibition of cell death and protects against oxidative, endoplasmic reticulum and mitochondrial stress by inducing secretion of the cytoprotective pigment epithelium-derived growth factor (PEDF) and probably other protective transcripts in a GNA13/RHOA/SRE-dependent manner. Forms dynamic heteroreceptor complexes with HTR1A and GALR1 depending on cell type or specific physiological states, resulting in signaling diversity: HTR1A-GPR39 shows additive increase in signaling along the serum response element (SRE) and NF-kappa-B pathways while GALR1 acts as an antagonist blocking SRE. This Bos taurus (Bovine) protein is G-protein coupled receptor 39 (GPR39).